The sequence spans 530 residues: Bifunctional purine biosynthesis protein PurH (530 aa).

The 148-residue stretch at 1–148 (MNNARPIRRA…KNHKDVTIVV (148 aa)) folds into the MGS-like domain.

Belongs to the PurH family.

The catalysed reaction is (6R)-10-formyltetrahydrofolate + 5-amino-1-(5-phospho-beta-D-ribosyl)imidazole-4-carboxamide = 5-formamido-1-(5-phospho-D-ribosyl)imidazole-4-carboxamide + (6S)-5,6,7,8-tetrahydrofolate. It carries out the reaction IMP + H2O = 5-formamido-1-(5-phospho-D-ribosyl)imidazole-4-carboxamide. Its pathway is purine metabolism; IMP biosynthesis via de novo pathway; 5-formamido-1-(5-phospho-D-ribosyl)imidazole-4-carboxamide from 5-amino-1-(5-phospho-D-ribosyl)imidazole-4-carboxamide (10-formyl THF route): step 1/1. It functions in the pathway purine metabolism; IMP biosynthesis via de novo pathway; IMP from 5-formamido-1-(5-phospho-D-ribosyl)imidazole-4-carboxamide: step 1/1. This chain is Bifunctional purine biosynthesis protein PurH, found in Vibrio parahaemolyticus serotype O3:K6 (strain RIMD 2210633).